A 99-amino-acid polypeptide reads, in one-letter code: Secreted RxLR effector protein 94 (99 aa).

Positions 35–55 (RQLRQSANPSKAWHQWKSETR) match the RxLR-dEER motif.

It belongs to the RxLR effector family.

The protein resides in the secreted. It localises to the host nucleus. Its subcellular location is the host cytoplasm. In terms of biological role, secreted effector that completely suppresses the host cell death induced by cell death-inducing proteins. The sequence is that of Secreted RxLR effector protein 94 from Plasmopara viticola (Downy mildew of grapevine).